A 270-amino-acid chain; its full sequence is uncharacterized protein (270 aa).

The first 22 residues, 1-22 (MGYIKRMALYMSVFLLIIFIVG), serve as a signal peptide directing secretion. Cysteine 23 is lipidated: N-palmitoyl cysteine. Cysteine 23 carries the S-diacylglycerol cysteine lipid modification.

Belongs to the staphylococcal tandem lipoprotein family.

It is found in the cell membrane. This is an uncharacterized protein from Staphylococcus aureus (strain COL).